A 456-amino-acid polypeptide reads, in one-letter code: Glycosyl hydrolase family 109 protein 2 (456 aa).

The tat-type signal signal peptide spans 1–33 (MSGFDRRSFLKASMVTAAATALAACASSERATG). NAD(+) is bound by residues 63 to 64 (ER), Asp85, 134 to 137 (WAWH), 154 to 155 (EV), and Asn183. Substrate contacts are provided by residues Tyr212, Arg231, 243–246 (YPTH), and Tyr325. Residue Tyr243 participates in NAD(+) binding.

The protein belongs to the Gfo/Idh/MocA family. Glycosyl hydrolase 109 subfamily. NAD(+) serves as cofactor. Predicted to be exported by the Tat system. The position of the signal peptide cleavage has not been experimentally proven.

Glycosidase. This is Glycosyl hydrolase family 109 protein 2 from Shewanella sp. (strain MR-4).